A 208-amino-acid chain; its full sequence is Uracil phosphoribosyltransferase (208 aa).

5-phospho-alpha-D-ribose 1-diphosphate contacts are provided by residues Arg-78, Arg-103, and 130–138 (DPMLAIGGS). Residues Ile-193 and 198–200 (GDA) contribute to the uracil site. Residue Asp-199 participates in 5-phospho-alpha-D-ribose 1-diphosphate binding.

Belongs to the UPRTase family. The cofactor is Mg(2+).

The enzyme catalyses UMP + diphosphate = 5-phospho-alpha-D-ribose 1-diphosphate + uracil. The protein operates within pyrimidine metabolism; UMP biosynthesis via salvage pathway; UMP from uracil: step 1/1. Its activity is regulated as follows. Allosterically activated by GTP. Catalyzes the conversion of uracil and 5-phospho-alpha-D-ribose 1-diphosphate (PRPP) to UMP and diphosphate. The polypeptide is Uracil phosphoribosyltransferase (Vibrio cholerae serotype O1 (strain ATCC 39315 / El Tor Inaba N16961)).